A 132-amino-acid polypeptide reads, in one-letter code: Glycerol-3-phosphate cytidylyltransferase (132 aa).

CTP-binding positions include threonine 9–tyrosine 10 and histidine 14–histidine 17. Residue lysine 44 participates in substrate binding. Lysine 46 is a CTP binding site. Lysine 77 provides a ligand contact to substrate. Position 113-120 (arginine 113–threonine 120) interacts with CTP.

It belongs to the cytidylyltransferase family. As to quaternary structure, homotetramer or homodimer.

It is found in the cytoplasm. The enzyme catalyses sn-glycerol 3-phosphate + CTP + H(+) = CDP-glycerol + diphosphate. Its pathway is cell wall biogenesis; poly(ribitol phosphate) teichoic acid biosynthesis. Its function is as follows. Catalyzes the transfer of the cytidylyl group of CTP to sn-glycerol 3-phosphate so the activated glycerol 3-phosphate can be used for teichoic acid synthesis, via incorporation into both the linkage unit by TarB and TarF. The chain is Glycerol-3-phosphate cytidylyltransferase from Staphylococcus aureus (strain NCTC 8325 / PS 47).